A 955-amino-acid polypeptide reads, in one-letter code: Glycine dehydrogenase (decarboxylating) (955 aa).

Lys702 carries the N6-(pyridoxal phosphate)lysine modification.

Belongs to the GcvP family. The glycine cleavage system is composed of four proteins: P, T, L and H. It depends on pyridoxal 5'-phosphate as a cofactor.

It carries out the reaction N(6)-[(R)-lipoyl]-L-lysyl-[glycine-cleavage complex H protein] + glycine + H(+) = N(6)-[(R)-S(8)-aminomethyldihydrolipoyl]-L-lysyl-[glycine-cleavage complex H protein] + CO2. Functionally, the glycine cleavage system catalyzes the degradation of glycine. The P protein binds the alpha-amino group of glycine through its pyridoxal phosphate cofactor; CO(2) is released and the remaining methylamine moiety is then transferred to the lipoamide cofactor of the H protein. The protein is Glycine dehydrogenase (decarboxylating) of Bordetella avium (strain 197N).